Reading from the N-terminus, the 219-residue chain is Clathrin light chain (219 aa).

Positions 32-136 are disordered; it reads AEITGGSASA…KKEELRQQSK (105 aa). The segment at 96–158 is involved in binding clathrin heavy chain; that stretch reads PPPSREEPEK…SISKTKLASR (63 aa). The segment covering 99 to 136 has biased composition (basic and acidic residues); it reads SREEPEKIRKWREEQKQRLEEKDIEEERKKEELRQQSK.

Belongs to the clathrin light chain family. In terms of assembly, clathrin coats are formed from molecules containing 3 heavy chains and 3 light chains.

Its subcellular location is the cytoplasmic vesicle membrane. It localises to the membrane. The protein resides in the coated pit. Clathrin is the major protein of the polyhedral coat of coated pits and vesicles. This chain is Clathrin light chain (Clc), found in Drosophila melanogaster (Fruit fly).